The primary structure comprises 244 residues: MAAEKILKPESQLKKAKYDEKKSEEFLKARAARRVANKQKRAAILERNAAHQKEYEAAERAVIDAKREAKASGSYYVEAQPKLVFVVRIKGINKIPPKPRKVLQLLRLTQINSGTFVKVTKATSELLKLIEPYVAYGYPSYSTVRQLVYKRGHGKINKQRIALSDNAIVEANLGKFGILSIDDLIHEIVTVGPHFKQANNFLWPFKLSNPSGGWGVPRKFKHFIQGGAFGNREQFINKLVKAMN.

Belongs to the universal ribosomal protein uL30 family.

The polypeptide is Large ribosomal subunit protein uL30 (RPL7) (Candida glabrata (strain ATCC 2001 / BCRC 20586 / JCM 3761 / NBRC 0622 / NRRL Y-65 / CBS 138) (Yeast)).